The primary structure comprises 703 residues: Metastasis-associated protein MTA1 (703 aa).

Residues 1–164 form the BAH domain; that stretch reads MAANMYRVGD…PQQKTLLADK (164 aa). The ELM2 domain maps to 165–276; it reads GEIRVGNRYQ…KAISALVPQG (112 aa). Residue Lys-182 forms a Glycyl lysine isopeptide (Lys-Gly) (interchain with G-Cter in ubiquitin) linkage. Residues 283-335 form the SANT domain; that stretch reads DEMEEWSASEANLFEEALEKYGKDFTDIQQDFLPWKSLTSIIEYYYMWKTTDR. Ser-386 bears the Phosphoserine mark. A GATA-type; atypical zinc finger spans residues 393–420; that stretch reads CESCYTTQSYQWYSWGPPNMQCRLCASC. The tract at residues 437–460 is disordered; the sequence is DGERPGPNRNNMSPHGIPARSSGS. Ser-449 is subject to Phosphoserine. Lys-509 is covalently cross-linked (Glycyl lysine isopeptide (Lys-Gly) (interchain with G-Cter in SUMO2 and SUMO3)). Ser-522 is modified (phosphoserine). Residues 542 to 552 are compositionally biased toward basic and acidic residues; it reads ETHPRPPKPDP. Positions 542 to 583 are disordered; it reads ETHPRPPKPDPVKSSSSVLSSLTPAKSAPVINNGSPTILGKR. The SH3-binding signature appears at 545-552; that stretch reads PRPPKPDP. Residue Lys-549 forms a Glycyl lysine isopeptide (Lys-Gly) (interchain with G-Cter in SUMO2) linkage. Over residues 553-565 the composition is skewed to low complexity; the sequence is VKSSSSVLSSLTP. Thr-564 carries the phosphothreonine modification. Ser-576 carries the phosphoserine modification. Thr-578 is modified (phosphothreonine). Lys-614 is subject to N6-acetyllysine; alternate. Residue Lys-614 forms a Glycyl lysine isopeptide (Lys-Gly) (interchain with G-Cter in ubiquitin); alternate linkage. Ser-627 is modified (phosphoserine). The tract at residues 644–674 is interaction with RBBP4; it reads DVFYMATEETRKIRKLLSSSETKRAARRPYK. Residues 661 to 703 form a disordered region; sequence SSSETKRAARRPYKPIALRQSQALPLRPPPPAPVNDEPIVIED. An SH3-binding motif is present at residues 684–693; sequence LPLRPPPPAP. Positions 699–703 match the SUMO interaction motif 1 (SIM); crucial for efficient sumoylation motif; the sequence is IVIED.

Belongs to the metastasis-associated protein family. In terms of assembly, component of the nucleosome remodeling and deacetylase (NuRD) repressor complex, composed of core proteins MTA1, MTA2, MTA3, RBBP4, RBBP7, HDAC1, HDAC2, MBD2, MBD3, and peripherally associated proteins CDK2AP1, CDK2AP2, GATAD2A, GATAD2B, CHD3, CHD4 and CHD5. The exact stoichiometry of the NuRD complex is unknown, and some subunits such as MBD2 and MBD3, GATAD2A and GATAD2B, and CHD3, CHD4 and CHD5 define mutually exclusive NuRD complexes. Interacts with RBBP4; the interaction is direct. Interacts with BMAL1. Interacts with CLOCK. Interacts with COP1. Interacts with CSNK1G2 in the cytoplasm. Interacts with EP300. Interacts with HDAC2. Interacts with ITGB3BP/CENPR. Interacts with MBD3L2. Interacts with MDM2. Interacts with NACC2. Interacts with p53/TP53. Interacts with PIAS1. Interacts with PIAS3. Interacts with PIAS4. Interacts with PWWP2A. Interacts with PWWP2B. Interacts with SENP1. Interacts with SENP2. Interacts with SIX3; facilitates the binding of SIX3 to the core DNA motif of SIX3 promoter. Interacts with SUMO1. Interacts with SUMO2. Interacts with TFCP2L1; which is indispensable for TFCP2L1-mediated self-renewal-promoting effect and endoderm-inhibiting action. Interacts with TFAP2C. Interacts with TPR. Interacts with UBE2I/UBC9. Phosphorylation by CSNK1G2/CK1 triggered by estrogen enhances corepression of estrogen receptor (ER). In terms of processing, acetylation is essential for its transcriptional coactivator activity. Post-translationally, sumoylation positively regulates its transcriptional corepressor activity but does not affect the protein stability. Sumoylated preferentially by SUMO2 or SUMO3 than SUMO1. Sumoylation is enhanced by PIAS1/3/4 and preferentially sumoylated by SUMO2 in the presence of PIAS1/3/4. Desumoylated by SENP1. Ubiquitinated by COP1, which leads to proteasomal degradation. Isoform 1 abundant in testis and expressed at low levels in brain, heart, lung, liver, and kidney. Isoform 2 abundant in adrenal gland, brain, colon, heart, liver, lung, muscle, prostate, stomach, testis, and thymus and expressed at low levels in duodenum, kidney, pancreas, parotid, and spleen.

It localises to the nucleus. Its subcellular location is the nucleus envelope. It is found in the cytoplasm. The protein localises to the cytoskeleton. The protein resides in the rough endoplasmic reticulum. It localises to the golgi apparatus. Its subcellular location is the zymogen granule. In terms of biological role, transcriptional coregulator which can act as both a transcriptional corepressor and coactivator. Acts as a component of the histone deacetylase NuRD complex which participates in the remodeling of chromatin. In the NuRD complex, regulates transcription of its targets by modifying the acetylation status of the target chromatin and cofactor accessibility to the target DNA. In conjunction with other components of NuRD, acts as a transcriptional corepressor of BRCA1, ESR1, TFF1 and CDKN1A. Acts as a transcriptional coactivator of BCAS3, and SUMO2, independent of the NuRD complex. Stimulates the expression of WNT1 by inhibiting the expression of its transcriptional corepressor SIX3. Regulates p53-dependent and -independent DNA repair processes following genotoxic stress. Regulates the stability and function of p53/TP53 by inhibiting its ubiquitination by COP1 and MDM2 thereby regulating the p53-dependent DNA repair. Plays a role in the regulation of the circadian clock and is essential for the generation and maintenance of circadian rhythms under constant light and for normal entrainment of behavior to light-dark (LD) cycles. Positively regulates the CLOCK-BMAL1 heterodimer mediated transcriptional activation of its own transcription and the transcription of CRY1. Regulates deacetylation of BMAL1 by regulating SIRT1 expression, resulting in derepressing CRY1-mediated transcription repression. With TFCP2L1, promotes establishment and maintenance of pluripotency in embryonic stem cells (ESCs) and inhibits endoderm differentiation. In Rattus norvegicus (Rat), this protein is Metastasis-associated protein MTA1 (Mta1).